The sequence spans 387 residues: uncharacterized protein (387 aa).

A signal peptide spans 1–27 (MKKWMITIAMLILAGIALFVFISPLKS).

This is an uncharacterized protein from Bacillus subtilis (strain 168).